Reading from the N-terminus, the 530-residue chain is UDP-N-acetylmuramoyl-L-alanyl-D-glutamate--2,6-diaminopimelate ligase (530 aa).

Leu-52 contributes to the UDP-N-acetyl-alpha-D-muramoyl-L-alanyl-D-glutamate binding site. An ATP-binding site is contributed by 139–145 (GTSGKTT). Residues 181–182 (TT), Ser-208, and Arg-216 each bind UDP-N-acetyl-alpha-D-muramoyl-L-alanyl-D-glutamate. An N6-carboxylysine modification is found at Lys-248. Residues Arg-410, 434–437 (DNPR), Gly-488, and Glu-492 each bind meso-2,6-diaminopimelate. Residues 434-437 (DNPR) carry the Meso-diaminopimelate recognition motif motif.

The protein belongs to the MurCDEF family. MurE subfamily. Requires Mg(2+) as cofactor. Carboxylation is probably crucial for Mg(2+) binding and, consequently, for the gamma-phosphate positioning of ATP.

Its subcellular location is the cytoplasm. The catalysed reaction is UDP-N-acetyl-alpha-D-muramoyl-L-alanyl-D-glutamate + meso-2,6-diaminopimelate + ATP = UDP-N-acetyl-alpha-D-muramoyl-L-alanyl-gamma-D-glutamyl-meso-2,6-diaminopimelate + ADP + phosphate + H(+). It functions in the pathway cell wall biogenesis; peptidoglycan biosynthesis. Catalyzes the addition of meso-diaminopimelic acid to the nucleotide precursor UDP-N-acetylmuramoyl-L-alanyl-D-glutamate (UMAG) in the biosynthesis of bacterial cell-wall peptidoglycan. The polypeptide is UDP-N-acetylmuramoyl-L-alanyl-D-glutamate--2,6-diaminopimelate ligase (Mycobacterium leprae (strain TN)).